The chain runs to 336 residues: tRNA pseudouridine synthase D (336 aa).

Catalysis depends on D84, which acts as the Nucleophile. Residues 164 to 298 (GVPNYFGEQR…TPSYRWLVGD (135 aa)) enclose the TRUD domain.

Belongs to the pseudouridine synthase TruD family.

The catalysed reaction is uridine(13) in tRNA = pseudouridine(13) in tRNA. Functionally, responsible for synthesis of pseudouridine from uracil-13 in transfer RNAs. This is tRNA pseudouridine synthase D from Cellvibrio japonicus (strain Ueda107) (Pseudomonas fluorescens subsp. cellulosa).